The chain runs to 707 residues: Acyl-CoA ligase 891, peroxisomal (707 aa).

259-270 lines the ATP pocket; the sequence is INYTSGTTGPPK. Residues 525-549 are fatty acid-binding; sequence DGWFRTGDVCTIDEKGRFIIIDRRK. The Peroxisome targeting signal motif lies at 705–707; sequence AKL.

It belongs to the ATP-dependent AMP-binding enzyme family.

It localises to the peroxisome matrix. It carries out the reaction (4E,8E)-10-(4-hydroxy-6-methoxy-7-methyl-3-oxo-1,3-dihydro-2-benzofuran-5-yl)-4,8-dimethyldeca-4,8-dienoate + ATP + CoA = (4E,8E)-10-(4-hydroxy-6-methoxy-7-methyl-3-oxo-1,3-dihydro-2-benzofuran-5-yl)-4,8-dimethyldeca-4,8-dienoyl-CoA + AMP + diphosphate. It functions in the pathway secondary metabolite biosynthesis; terpenoid biosynthesis. In terms of biological role, acyl-CoA ligase involved in the biosynthesis of mycophenolic acid (MPA), the first isolated antibiotic natural product in the world obtained from a culture of Penicillium brevicompactum in 1893. The peroxisomal acyl-CoA ligase 891 converts the intermediate MFDHMP-3C into MFDHMP-3C-CoA which impairs its diffusion from the peroxisome. The first step of the pathway is the synthesis of 5-methylorsellinic acid (5MOA) by the cytosolic polyketide synthase mpaC. 5MOA is then converted to the phthalide compound 5,7-dihydroxy-4,6-dimethylphthalide (DHMP) by the endoplasmic reticulum-bound cytochrome P450 monooxygenase mpaDE. MpaDE first catalyzes hydroxylation of 5-MOA to 4,6-dihydroxy-2-(hydroxymethyl)-3-methylbenzoic acid (DHMB). MpaDE then acts as a lactone synthase that catalyzes the ring closure to convert DHMB into DHMP. The next step is the prenylation of DHMP by the Golgi apparatus-associated prenyltransferase mpaA to yield farnesyl-DHMP (FDHMP). The ER-bound oxygenase mpaB then mediates the oxidative cleavage the C19-C20 double bond in FDHMP to yield FDHMP-3C via a mycophenolic aldehyde intermediate. The O-methyltransferase mpaG catalyzes the methylation of FDHMP-3C to yield MFDHMP-3C. After the cytosolic methylation of FDHMP-3C, MFDHMP-3C enters into peroxisomes probably via free diffusion due to its low molecular weight. Upon a peroxisomal CoA ligation reaction, catalyzed by a beta-oxidation component enzyme acyl-CoA ligase ACL891, MFDHMP-3C-CoA would then be restricted to peroxisomes for the following beta-oxidation pathway steps. The peroxisomal beta-oxidation machinery than converts MFDHMP-3C-CoA into MPA_CoA, via a beta-oxidation chain-shortening process. Finally mpaH acts as a peroxisomal acyl-CoA hydrolase with high substrate specificity toward MPA-CoA to release the final product MPA. In Penicillium roqueforti (strain FM164), this protein is Acyl-CoA ligase 891, peroxisomal.